Here is a 111-residue protein sequence, read N- to C-terminus: X antigen family member 2 (111 aa).

Disordered regions lie at residues 1–61 (MSWR…AAEI) and 77–111 (KTGDGCEGGTDVKGKILPKAEHFKMPEAGEGKSQV). A compositionally biased stretch (basic and acidic residues) spans 86–111 (TDVKGKILPKAEHFKMPEAGEGKSQV).

This sequence belongs to the GAGE family.

This chain is X antigen family member 2 (XAGE2), found in Homo sapiens (Human).